A 315-amino-acid chain; its full sequence is L-threo-3-deoxy-hexylosonate aldolase (315 aa).

50 to 51 (SN) provides a ligand contact to substrate. Lysine 174 serves as the catalytic Schiff-base intermediate with substrate.

Belongs to the DapA family.

It catalyses the reaction 2-dehydro-3-deoxy-L-galactonate = L-glyceraldehyde + pyruvate. The protein operates within carbohydrate acid metabolism. In terms of biological role, mediates the conversion of 2-dehydro-3-deoxy-L-galactonate to pyruvate and L-glyceraldehyde in D-galacturonate catabolic process. The protein is L-threo-3-deoxy-hexylosonate aldolase (lga1) of Hypocrea jecorina (Trichoderma reesei).